Reading from the N-terminus, the 216-residue chain is uncharacterized protein (216 aa).

A helical transmembrane segment spans residues 7 to 29; that stretch reads ILVIFFLIFFIGFEFSDMTLAFI.

It is found in the membrane. This is an uncharacterized protein from Archaeoglobus fulgidus (strain ATCC 49558 / DSM 4304 / JCM 9628 / NBRC 100126 / VC-16).